The primary structure comprises 343 residues: Trans-enoyl reductase ACTTS2 (343 aa).

42–45 (GDWK) lines the NADP(+) pocket. A substrate-binding site is contributed by 128-135 (VGITTVGQ). Residues 162–165 (STAT), 185–188 (SPHN), and Tyr203 contribute to the NADP(+) site. Residue 268–272 (GYTAL) coordinates substrate. 333–334 (VS) serves as a coordination point for NADP(+).

It belongs to the zinc-containing alcohol dehydrogenase family. As to quaternary structure, monomer.

It functions in the pathway mycotoxin biosynthesis. In terms of biological role, trans-enoyl reductase; part of the gene clusters that mediate the biosynthesis of the host-selective toxins (HSTs) ACT-toxins responsible for brown spot of tangerine disease by the tangerine pathotype which affects tangerines and mandarins. ACT-toxins consist of three moieties, 9,10-epoxy-8-hydroxy-9-methyl-decatrienoic acid (EDA), valine and a polyketide. ACT-toxin I is toxic to both citrus and pear; toxin II the 5''-deoxy derivative of ACT-toxin I, is highly toxic to pear and slightly toxic to citrus. On cellular level, ACT-toxins affect plasma membrane of susceptible cells and cause a sudden increase in loss of K(+) after a few minutes of toxin treatment. The acyl-CoA ligase ACTT1, the hydrolase ACTT2, the enoyl-CoA hydratases ACTT3 and ACTT6, and the acyl-CoA synthetase ACTT5 are all involved in the biosynthesis of the AK-, AF- and ACT-toxin common 9,10-epoxy-8-hydroxy-9-methyl-decatrienoic acid (EDA) structural moiety. The exact role of each enzyme, and of additional enzymes identified within the AF-toxin clusters have still to be determined. On the other hand, ACTTS1 to ACTTS4 are specific to the tangerine pathotype. The function of ACTTS3 is to elongate the polyketide chain portion of ACT-toxin that is unique to this toxin. The enoyl-reductase ACTTS2 might complement the missing enoyl-reductase (ER) domain in ACTTS3 in the synthesis of the polyketide portion of ACT-toxin. The roles of the nonribosomal peptide synthetases-related proteins ACTTS1 and ACTTS4 have also still not been elucidated. The chain is Trans-enoyl reductase ACTTS2 from Alternaria alternata (Alternaria rot fungus).